A 190-amino-acid chain; its full sequence is ATP synthase subunit delta (190 aa).

Belongs to the ATPase delta chain family. F-type ATPases have 2 components, F(1) - the catalytic core - and F(0) - the membrane proton channel. F(1) has five subunits: alpha(3), beta(3), gamma(1), delta(1), epsilon(1). F(0) has three main subunits: a(1), b(2) and c(10-14). The alpha and beta chains form an alternating ring which encloses part of the gamma chain. F(1) is attached to F(0) by a central stalk formed by the gamma and epsilon chains, while a peripheral stalk is formed by the delta and b chains.

It localises to the cell inner membrane. F(1)F(0) ATP synthase produces ATP from ADP in the presence of a proton or sodium gradient. F-type ATPases consist of two structural domains, F(1) containing the extramembraneous catalytic core and F(0) containing the membrane proton channel, linked together by a central stalk and a peripheral stalk. During catalysis, ATP synthesis in the catalytic domain of F(1) is coupled via a rotary mechanism of the central stalk subunits to proton translocation. In terms of biological role, this protein is part of the stalk that links CF(0) to CF(1). It either transmits conformational changes from CF(0) to CF(1) or is implicated in proton conduction. The polypeptide is ATP synthase subunit delta (Salinibacter ruber (strain DSM 13855 / M31)).